The sequence spans 99 residues: Acylphosphatase-2 (99 aa).

Serine 2 carries the post-translational modification N-acetylserine. An Acylphosphatase-like domain is found at 9–99 (SVDYEVFGRV…LEYSNFSIRY (91 aa)). Residues arginine 24 and asparagine 42 contribute to the active site. The residue at position 93 (serine 93) is a Phosphoserine.

Belongs to the acylphosphatase family.

It catalyses the reaction an acyl phosphate + H2O = a carboxylate + phosphate + H(+). Its function is as follows. Its physiological role is not yet clear. This is Acylphosphatase-2 (ACYP2) from Homo sapiens (Human).